Reading from the N-terminus, the 426-residue chain is MIDQRLLRENPNLISEGLKSRGMDVDLGPLQKFCKDLKELEEKRNSLQAQGNSIGKEVGQKIKQGLPHDSEEISNLRVKGNQIKKQVGIIEEEEKSISNKLNEQILCLPNLPEKNSLEGKNEKDNKELRRWGEPISGNTLKEHWEIANQLNLWDSERSSVIAKSRFVTLFKHAAKLERSLINFMLDLHIKKGYLEVLPPALVNTASLTGSGQLPKFAEESFRCADDDLWLTPTAEVPITSLHRGEIIPRDLLPLRYVAYSPCFRREAGSYGRDTRGLIRLHQFNKVELYWFSTPERSEDALEQITSDAESVLQELELPYRVIQLCTGDLGFSAKKTYDLEVWLPGANTFREISSCSNCGDFQARRSSIRTKDNNKKNILLHTLNGSGLAIGRTMAAILENGQQSDGSINLPKALIPYFGSNKLKPE.

Residue 233–235 (TAE) coordinates L-serine. 264 to 266 (RRE) contacts ATP. L-serine is bound at residue Glu-287. Residue 351–354 (EISS) participates in ATP binding. Position 386 (Ser-386) interacts with L-serine.

This sequence belongs to the class-II aminoacyl-tRNA synthetase family. Type-1 seryl-tRNA synthetase subfamily. As to quaternary structure, homodimer. The tRNA molecule binds across the dimer.

The protein resides in the cytoplasm. It carries out the reaction tRNA(Ser) + L-serine + ATP = L-seryl-tRNA(Ser) + AMP + diphosphate + H(+). The enzyme catalyses tRNA(Sec) + L-serine + ATP = L-seryl-tRNA(Sec) + AMP + diphosphate + H(+). It participates in aminoacyl-tRNA biosynthesis; selenocysteinyl-tRNA(Sec) biosynthesis; L-seryl-tRNA(Sec) from L-serine and tRNA(Sec): step 1/1. Catalyzes the attachment of serine to tRNA(Ser). Is also able to aminoacylate tRNA(Sec) with serine, to form the misacylated tRNA L-seryl-tRNA(Sec), which will be further converted into selenocysteinyl-tRNA(Sec). The chain is Serine--tRNA ligase from Prochlorococcus marinus (strain NATL2A).